Consider the following 308-residue polypeptide: Uricase-2 (308 aa).

Active-site charge relay system residues include Lys17 and Thr63. Residues Thr63, Asp64, Phe165, Arg182, Val237, Gln238, and Asn264 each contribute to the urate site. His266 (charge relay system) is an active-site residue. A Microbody targeting signal motif is present at residues 306–308 (SKL).

It belongs to the uricase family. Homotetramer. As to expression, expressed predominantly in the uninfected cells of the central tissue of the root nodule. Also expressed in the nodule parenchyma cells and vascular tissue, in the roots, stems and leaves of uninfected adult plants, and in the cotyledons, roots and hypocotyls of developing seedlings. Localized to the metaxylem parenchyma cells and phloem fibers of developing roots.

The protein resides in the peroxisome. The catalysed reaction is urate + O2 + H2O = 5-hydroxyisourate + H2O2. The protein operates within purine metabolism; urate degradation; (S)-allantoin from urate: step 1/3. Catalyzes the oxidation of uric acid to 5-hydroxyisourate, which is further processed to form (S)-allantoin. The chain is Uricase-2 (URIII) from Phaseolus vulgaris (Kidney bean).